Here is a 172-residue protein sequence, read N- to C-terminus: MFNKVAFMNIPMMDLIMIVIAIIITIGSFLFIAYLIFKYSKIKKQVKIIREVKINLPKMLKSNMIKNSFLIISLLCFYFGMLYIAGELVISHILFIAICWIVVFLYIIIKGETRGYICEEGLLVSGVLYSWKEFKDVKIEDNYIILTTPIHKIVIKKEKGVENILKNYLKRN.

The next 3 membrane-spanning stretches (helical) occupy residues 16–36, 68–88, and 89–109; these read IMIVIAIIITIGSFLFIAYLI, SFLIISLLCFYFGMLYIAGEL, and VISHILFIAICWIVVFLYIII.

Its subcellular location is the cell membrane. This is an uncharacterized protein from Methanocaldococcus jannaschii (strain ATCC 43067 / DSM 2661 / JAL-1 / JCM 10045 / NBRC 100440) (Methanococcus jannaschii).